Here is a 106-residue protein sequence, read N- to C-terminus: NADH dehydrogenase [ubiquinone] 1 beta subcomplex subunit 10-B (106 aa).

Positions 1–25 are disordered; sequence MGRKKGLPEFEESAPDGFDPENPYK.

It belongs to the complex I NDUFB10 subunit family. In terms of assembly, complex I is composed of at least 49 different subunits.

It is found in the mitochondrion inner membrane. Its function is as follows. Accessory subunit of the mitochondrial membrane respiratory chain NADH dehydrogenase (Complex I), that is believed not to be involved in catalysis. Complex I functions in the transfer of electrons from NADH to the respiratory chain. The immediate electron acceptor for the enzyme is believed to be ubiquinone. The chain is NADH dehydrogenase [ubiquinone] 1 beta subcomplex subunit 10-B from Arabidopsis thaliana (Mouse-ear cress).